Reading from the N-terminus, the 303-residue chain is mRNA-capping enzyme subunit beta (303 aa).

Belongs to the fungal TPase family. As to quaternary structure, heterodimer. The mRNA-capping enzyme is composed of two separate chains alpha and beta, respectively a mRNA guanylyltransferase and an mRNA 5'-triphosphate monophosphatase. Mg(2+) is required as a cofactor.

Its subcellular location is the nucleus. The enzyme catalyses a 5'-end triphospho-ribonucleoside in mRNA + H2O = a 5'-end diphospho-ribonucleoside in mRNA + phosphate + H(+). Its function is as follows. First step of mRNA capping. Converts the 5'-triphosphate end of a nascent mRNA chain into a diphosphate end. In Schizosaccharomyces pombe (strain 972 / ATCC 24843) (Fission yeast), this protein is mRNA-capping enzyme subunit beta (pct1).